The sequence spans 252 residues: Chitooligosaccharide deacetylase (252 aa).

Residues His-61 and His-125 each coordinate Mg(2+).

It belongs to the YdjC deacetylase family. ChbG subfamily. In terms of assembly, homodimer. Requires Mg(2+) as cofactor.

The protein resides in the cytoplasm. The catalysed reaction is N,N'-diacetylchitobiose + H2O = N-acetyl-beta-D-glucosaminyl-(1-&gt;4)-D-glucosamine + acetate. It carries out the reaction diacetylchitobiose-6'-phosphate + H2O = N'-monoacetylchitobiose-6'-phosphate + acetate. It participates in glycan degradation; chitin degradation. Involved in the degradation of chitin. ChbG is essential for growth on the acetylated chitooligosaccharides chitobiose and chitotriose but is dispensable for growth on cellobiose and chitosan dimer, the deacetylated form of chitobiose. Deacetylation of chitobiose-6-P and chitotriose-6-P is necessary for both the activation of the chb promoter by the regulatory protein ChbR and the hydrolysis of phosphorylated beta-glucosides by the phospho-beta-glucosidase ChbF. Catalyzes the removal of only one acetyl group from chitobiose-6-P to yield monoacetylchitobiose-6-P, the inducer of ChbR and the substrate of ChbF. The protein is Chitooligosaccharide deacetylase of Salmonella enteritidis PT4 (strain P125109).